Here is a 118-residue protein sequence, read N- to C-terminus: Small ribosomal subunit protein uS19c (118 aa).

Positions 92-118 are disordered; the sequence is KKSSKKVTKNKKSIKKNIKTTSKKFKK.

It belongs to the universal ribosomal protein uS19 family.

The protein localises to the plastid. Functionally, protein S19 forms a complex with S13 that binds strongly to the 16S ribosomal RNA. This chain is Small ribosomal subunit protein uS19c (rps19), found in Euglena longa (Euglenophycean alga).